The primary structure comprises 553 residues: uncharacterized protein (553 aa).

Residues 26 to 109 (RFEFVGWGSR…YDLLEKHYKE (84 aa)) enclose the SWIB/MDM2 domain. A Plus3 domain is found at 150–275 (AIVSDNIKLL…KAKKLHKDQT (126 aa)). 2 disordered regions span residues 335–357 (QNPE…SESP) and 447–482 (PVNN…ETLD). Residues 343–353 (EAHKSDNEQRL) are compositionally biased toward basic and acidic residues. Positions 447 to 461 (PVNNVDNGSQVQPNP) are enriched in polar residues. A compositionally biased stretch (acidic residues) spans 466–480 (ELSDDDEDDNGDGET). Residues 497–551 (KLNWLYKDPQGLVQGPFSLTQLKAWSDAEYFTKQFRVWMTGESMESAVLLTDVLR) enclose the GYF domain.

This is an uncharacterized protein from Arabidopsis thaliana (Mouse-ear cress).